The primary structure comprises 158 residues: 6,7-dimethyl-8-ribityllumazine synthase (158 aa).

5-amino-6-(D-ribitylamino)uracil contacts are provided by residues phenylalanine 24, alanine 58–glutamate 60, and alanine 82–isoleucine 84. Glycine 87–threonine 88 contacts (2S)-2-hydroxy-3-oxobutyl phosphate. Histidine 90 acts as the Proton donor in catalysis. Residue phenylalanine 115 coordinates 5-amino-6-(D-ribitylamino)uracil. Arginine 129 serves as a coordination point for (2S)-2-hydroxy-3-oxobutyl phosphate.

This sequence belongs to the DMRL synthase family. As to quaternary structure, forms an icosahedral capsid composed of 60 subunits, arranged as a dodecamer of pentamers.

It carries out the reaction (2S)-2-hydroxy-3-oxobutyl phosphate + 5-amino-6-(D-ribitylamino)uracil = 6,7-dimethyl-8-(1-D-ribityl)lumazine + phosphate + 2 H2O + H(+). Its pathway is cofactor biosynthesis; riboflavin biosynthesis; riboflavin from 2-hydroxy-3-oxobutyl phosphate and 5-amino-6-(D-ribitylamino)uracil: step 1/2. In terms of biological role, catalyzes the formation of 6,7-dimethyl-8-ribityllumazine by condensation of 5-amino-6-(D-ribitylamino)uracil with 3,4-dihydroxy-2-butanone 4-phosphate. This is the penultimate step in the biosynthesis of riboflavin. This is 6,7-dimethyl-8-ribityllumazine synthase from Pseudomonas paraeruginosa (strain DSM 24068 / PA7) (Pseudomonas aeruginosa (strain PA7)).